A 337-amino-acid polypeptide reads, in one-letter code: DNA-directed RNA polymerase subunit alpha (337 aa).

Residues 1–233 form an alpha N-terminal domain (alpha-NTD) region; it reads MIQKNWQELI…DQLSIFVNFE (233 aa). An alpha C-terminal domain (alpha-CTD) region spans residues 249–337; sequence FNPVLLKKVD…DLAKRYEDQY (89 aa).

This sequence belongs to the RNA polymerase alpha chain family. As to quaternary structure, homodimer. The RNAP catalytic core consists of 2 alpha, 1 beta, 1 beta' and 1 omega subunit. When a sigma factor is associated with the core the holoenzyme is formed, which can initiate transcription.

The enzyme catalyses RNA(n) + a ribonucleoside 5'-triphosphate = RNA(n+1) + diphosphate. DNA-dependent RNA polymerase catalyzes the transcription of DNA into RNA using the four ribonucleoside triphosphates as substrates. This chain is DNA-directed RNA polymerase subunit alpha, found in Brucella canis (strain ATCC 23365 / NCTC 10854 / RM-666).